We begin with the raw amino-acid sequence, 124 residues long: Fluoride-specific ion channel FluC 1 (124 aa).

The next 4 helical transmembrane spans lie at 4-24 (VLIGVAGAAGAVARLLVGAWI), 36-56 (GTFAVNIAGSLLLGLLTGLVV), 67-87 (VVLGAGFLGAFTTFSTWLLDL), and 103-123 (AALSTGLGLLAAWLGLALGWG). Glycine 75 and threonine 78 together coordinate Na(+).

This sequence belongs to the fluoride channel Fluc/FEX (TC 1.A.43) family.

Its subcellular location is the cell membrane. The enzyme catalyses fluoride(in) = fluoride(out). Na(+) is not transported, but it plays an essential structural role and its presence is essential for fluoride channel function. Its function is as follows. Fluoride-specific ion channel. Important for reducing fluoride concentration in the cell, thus reducing its toxicity. This chain is Fluoride-specific ion channel FluC 1, found in Symbiobacterium thermophilum (strain DSM 24528 / JCM 14929 / IAM 14863 / T).